A 73-amino-acid chain; its full sequence is Translation initiation factor IF-1 (73 aa).

The 73-residue stretch at 1–73 folds into the S1-like domain; sequence MAKKDGVIEL…ARGRIVYRYK (73 aa).

This sequence belongs to the IF-1 family. In terms of assembly, component of the 30S ribosomal translation pre-initiation complex which assembles on the 30S ribosome in the order IF-2 and IF-3, IF-1 and N-formylmethionyl-tRNA(fMet); mRNA recruitment can occur at any time during PIC assembly.

It is found in the cytoplasm. In terms of biological role, one of the essential components for the initiation of protein synthesis. Stabilizes the binding of IF-2 and IF-3 on the 30S subunit to which N-formylmethionyl-tRNA(fMet) subsequently binds. Helps modulate mRNA selection, yielding the 30S pre-initiation complex (PIC). Upon addition of the 50S ribosomal subunit IF-1, IF-2 and IF-3 are released leaving the mature 70S translation initiation complex. The chain is Translation initiation factor IF-1 from Tropheryma whipplei (strain TW08/27) (Whipple's bacillus).